A 262-amino-acid polypeptide reads, in one-letter code: Undecaprenyl-diphosphatase (262 aa).

8 helical membrane passes run 15-35, 38-58, 91-111, 114-134, 149-169, 189-209, 219-239, and 242-262; these read LTEW…IILL, SSAA…IVAF, LYIL…AKYV, IFGS…LLYS, ALIV…RSGA, FLLS…VSPA, VGLL…LSII, and GRLH…LSLL.

This sequence belongs to the UppP family.

Its subcellular location is the cell membrane. The enzyme catalyses di-trans,octa-cis-undecaprenyl diphosphate + H2O = di-trans,octa-cis-undecaprenyl phosphate + phosphate + H(+). Its function is as follows. Catalyzes the dephosphorylation of undecaprenyl diphosphate (UPP). This is Undecaprenyl-diphosphatase from Korarchaeum cryptofilum (strain OPF8).